We begin with the raw amino-acid sequence, 234 residues long: 2,3-bisphosphoglycerate-dependent phosphoglycerate mutase (234 aa).

Substrate contacts are provided by residues 8-15 (RHGESVWN), 21-22 (TG), arginine 60, 87-90 (ERHY), lysine 98, 114-115 (RR), and 183-184 (GN). Histidine 9 functions as the Tele-phosphohistidine intermediate in the catalytic mechanism. The active-site Proton donor/acceptor is glutamate 87.

This sequence belongs to the phosphoglycerate mutase family. BPG-dependent PGAM subfamily. In terms of assembly, homodimer.

The enzyme catalyses (2R)-2-phosphoglycerate = (2R)-3-phosphoglycerate. It participates in carbohydrate degradation; glycolysis; pyruvate from D-glyceraldehyde 3-phosphate: step 3/5. Functionally, catalyzes the interconversion of 2-phosphoglycerate and 3-phosphoglycerate. This chain is 2,3-bisphosphoglycerate-dependent phosphoglycerate mutase, found in Citrifermentans bemidjiense (strain ATCC BAA-1014 / DSM 16622 / JCM 12645 / Bem) (Geobacter bemidjiensis).